A 255-amino-acid chain; its full sequence is Cullin-like protein 3 (255 aa).

The protein belongs to the cullin family.

The protein is Cullin-like protein 3 of Arabidopsis thaliana (Mouse-ear cress).